We begin with the raw amino-acid sequence, 557 residues long: Fanconi anemia group C protein homolog (557 aa).

Belongs to the multisubunit FA complex composed of FANCA, FANCB, FANCC, FANCE, FANCF, FANCG, FANCL/PHF9 and FANCM. This complex may also include HSP70. Interacts with ZBTB32. Upon IFNG induction, interacts with STAT1. Interacts with CDK1. Interacts with EIF2AK2.

The protein resides in the nucleus. It is found in the cytoplasm. Its function is as follows. DNA repair protein that may operate in a postreplication repair or a cell cycle checkpoint function. May be implicated in interstrand DNA cross-link repair and in the maintenance of normal chromosome stability. Upon IFNG induction, may facilitate STAT1 activation by recruiting STAT1 to IFNGR1. In Rattus norvegicus (Rat), this protein is Fanconi anemia group C protein homolog (Fancc).